Here is a 271-residue protein sequence, read N- to C-terminus: Tryptophan synthase alpha chain (271 aa).

Active-site proton acceptor residues include Glu51 and Asp62.

The protein belongs to the TrpA family. As to quaternary structure, tetramer of two alpha and two beta chains.

It carries out the reaction (1S,2R)-1-C-(indol-3-yl)glycerol 3-phosphate + L-serine = D-glyceraldehyde 3-phosphate + L-tryptophan + H2O. Its pathway is amino-acid biosynthesis; L-tryptophan biosynthesis; L-tryptophan from chorismate: step 5/5. The alpha subunit is responsible for the aldol cleavage of indoleglycerol phosphate to indole and glyceraldehyde 3-phosphate. The chain is Tryptophan synthase alpha chain from Prochlorococcus marinus (strain NATL2A).